The sequence spans 323 residues: Alpha-tubulin N-acetyltransferase 1 (323 aa).

One can recognise an N-acetyltransferase domain in the interval 1–190 (MEFPFDVDAL…NNFVIFEGFF (190 aa)). Lys56 carries the post-translational modification N6-acetyllysine; by autocatalysis. Acetyl-CoA is bound at residue 124-137 (FYIHESVQRHGHGR). Lys146 carries the N6-acetyllysine; by autocatalysis modification. 160–169 (SQKLLKFLNK) provides a ligand contact to acetyl-CoA. Positions 196-239 (PPAPSLRATRHSRAAAVDPTPTAPARKLPPKRAEGDIKPYSSSD) are disordered. The span at 209-220 (AAAVDPTPTAPA) shows a compositional bias: low complexity. Basic and acidic residues predominate over residues 226–239 (KRAEGDIKPYSSSD). N6-acetyllysine; by autocatalysis is present on residues Lys233 and Lys244. Positions 252–287 (PLNRAPRRATPPAHPPPRSSSLGNSPERGPLRPFVP) are disordered. Residues Ser272 and Ser276 each carry the phosphoserine modification. Residue Arg305 is modified to Asymmetric dimethylarginine. Ser315 carries the post-translational modification Phosphoserine. Omega-N-methylarginine is present on Arg323.

It belongs to the acetyltransferase ATAT1 family. In terms of assembly, component of the BBSome complex. Interacts with AP2 alpha-adaptins, including AP2A2, but not with AP1 gamma-adaptin (AP1G1/AP1G2); this interaction is required for efficient alpha-tubulin acetylation, hence clathrin-coated pits are sites of microtubule acetylation. In terms of processing, autoacetylation strongly increases tubulin acetylation.

It localises to the cytoplasm. The protein resides in the membrane. The protein localises to the clathrin-coated pit. It is found in the cell junction. Its subcellular location is the focal adhesion. It localises to the cell projection. The protein resides in the axon. The protein localises to the cytoskeleton. It is found in the spindle. The catalysed reaction is L-lysyl-[alpha-tubulin] + acetyl-CoA = N(6)-acetyl-L-lysyl-[alpha-tubulin] + CoA + H(+). Its function is as follows. Specifically acetylates 'Lys-40' in alpha-tubulin on the lumenal side of microtubules. Promotes microtubule destabilization and accelerates microtubule dynamics; this activity may be independent of acetylation activity. Acetylates alpha-tubulin with a slow enzymatic rate, due to a catalytic site that is not optimized for acetyl transfer. Enters the microtubule through each end and diffuses quickly throughout the lumen of microtubules. Acetylates only long/old microtubules because of its slow acetylation rate since it does not have time to act on dynamically unstable microtubules before the enzyme is released. Required for normal sperm flagellar function. Promotes directional cell locomotion and chemotaxis, through AP2A2-dependent acetylation of alpha-tubulin at clathrin-coated pits that are concentrated at the leading edge of migrating cells. May facilitate primary cilium assembly. The polypeptide is Alpha-tubulin N-acetyltransferase 1 (Macaca mulatta (Rhesus macaque)).